The chain runs to 250 residues: 5'-nucleotidase SurE (250 aa).

Residues Asp8, Asp9, Ser40, and Asn94 each coordinate a divalent metal cation.

This sequence belongs to the SurE nucleotidase family. A divalent metal cation serves as cofactor.

The protein resides in the cytoplasm. It carries out the reaction a ribonucleoside 5'-phosphate + H2O = a ribonucleoside + phosphate. In terms of biological role, nucleotidase that shows phosphatase activity on nucleoside 5'-monophosphates. The sequence is that of 5'-nucleotidase SurE from Wolbachia sp. subsp. Brugia malayi (strain TRS).